A 557-amino-acid chain; its full sequence is Dihydroxy-acid dehydratase (557 aa).

Asp-78 is a binding site for Mg(2+). Cys-119 contacts [2Fe-2S] cluster. Residues Asp-120 and Lys-121 each contribute to the Mg(2+) site. Lys-121 is subject to N6-carboxylysine. Cys-192 is a binding site for [2Fe-2S] cluster. Position 442 (Glu-442) interacts with Mg(2+). Residue Ser-468 is the Proton acceptor of the active site.

The protein belongs to the IlvD/Edd family. In terms of assembly, homodimer. Requires [2Fe-2S] cluster as cofactor. The cofactor is Mg(2+).

It carries out the reaction (2R)-2,3-dihydroxy-3-methylbutanoate = 3-methyl-2-oxobutanoate + H2O. The catalysed reaction is (2R,3R)-2,3-dihydroxy-3-methylpentanoate = (S)-3-methyl-2-oxopentanoate + H2O. The protein operates within amino-acid biosynthesis; L-isoleucine biosynthesis; L-isoleucine from 2-oxobutanoate: step 3/4. It participates in amino-acid biosynthesis; L-valine biosynthesis; L-valine from pyruvate: step 3/4. Functions in the biosynthesis of branched-chain amino acids. Catalyzes the dehydration of (2R,3R)-2,3-dihydroxy-3-methylpentanoate (2,3-dihydroxy-3-methylvalerate) into 2-oxo-3-methylpentanoate (2-oxo-3-methylvalerate) and of (2R)-2,3-dihydroxy-3-methylbutanoate (2,3-dihydroxyisovalerate) into 2-oxo-3-methylbutanoate (2-oxoisovalerate), the penultimate precursor to L-isoleucine and L-valine, respectively. This is Dihydroxy-acid dehydratase from Bacillus cereus (strain Q1).